A 304-amino-acid chain; its full sequence is MSVLNTRTLTLDRHAAARRLHAFYVLTKPRVNTLIVFCAVIGMFLAVPDGLPDPKSVVAATLGIAFVAGAAAAMNCLIEAHIDARMARTRHRPLPRGELAPAETLLFAGVLGGTGLTVLYHWVNPLTMWLTLATFVGYAVVYTVLLKPRTPQNIVIGGASGAMPPVLGWAAVTGEVSADALLLFLIIFAWTPPHFWALALYRSADYARAGLPMLPVTHGPEFTRLSVLLYTCILFGVTLLPFATRMSGPLYLVCAVALGIGFLRHAWRLYADYSDAFARRTFRFSILYLFLLFAALLMDHYLPL.

Transmembrane regions (helical) follow at residues 31 to 51 (VNTLIVFCAVIGMFLAVPDGL), 58 to 78 (VAATLGIAFVAGAAAAMNCLI), 99 to 119 (LAPAETLLFAGVLGGTGLTVL), 126 to 146 (LTMWLTLATFVGYAVVYTVLL), 154 to 174 (IVIGGASGAMPPVLGWAAVTG), 180 to 200 (ALLLFLIIFAWTPPHFWALAL), 222 to 242 (FTRLSVLLYTCILFGVTLLPF), 243 to 263 (ATRMSGPLYLVCAVALGIGFL), and 284 to 304 (FSILYLFLLFAALLMDHYLPL).

It belongs to the UbiA prenyltransferase family. Protoheme IX farnesyltransferase subfamily.

It is found in the cell inner membrane. The enzyme catalyses heme b + (2E,6E)-farnesyl diphosphate + H2O = Fe(II)-heme o + diphosphate. It functions in the pathway porphyrin-containing compound metabolism; heme O biosynthesis; heme O from protoheme: step 1/1. Converts heme B (protoheme IX) to heme O by substitution of the vinyl group on carbon 2 of heme B porphyrin ring with a hydroxyethyl farnesyl side group. The polypeptide is Protoheme IX farnesyltransferase (Aromatoleum aromaticum (strain DSM 19018 / LMG 30748 / EbN1) (Azoarcus sp. (strain EbN1))).